The following is a 768-amino-acid chain: uncharacterized protein (768 aa).

This sequence to E.coli YkiA.

This is an uncharacterized protein from Escherichia coli (strain K12).